The sequence spans 277 residues: Phosphoenolpyruvate synthase regulatory protein (277 aa).

G157–T164 is a binding site for ADP.

Belongs to the pyruvate, phosphate/water dikinase regulatory protein family. PSRP subfamily.

The enzyme catalyses [pyruvate, water dikinase] + ADP = [pyruvate, water dikinase]-phosphate + AMP + H(+). It carries out the reaction [pyruvate, water dikinase]-phosphate + phosphate + H(+) = [pyruvate, water dikinase] + diphosphate. Bifunctional serine/threonine kinase and phosphorylase involved in the regulation of the phosphoenolpyruvate synthase (PEPS) by catalyzing its phosphorylation/dephosphorylation. This chain is Phosphoenolpyruvate synthase regulatory protein, found in Escherichia coli O17:K52:H18 (strain UMN026 / ExPEC).